Consider the following 348-residue polypeptide: Phosphatidylinositol 3,4,5-trisphosphate 3-phosphatase ptn1 (348 aa).

A Phosphatase tensin-type domain is found at 18–189; it reads EKVNRSFAYL…YYIEILKQFP (172 aa). C129 acts as the Phosphocysteine intermediate in catalysis.

It localises to the cytoplasmic vesicle. The enzyme catalyses a 1,2-diacyl-sn-glycero-3-phospho-(1D-myo-inositol-3,4,5-trisphosphate) + H2O = a 1,2-diacyl-sn-glycero-3-phospho-(1D-myo-inositol-4,5-bisphosphate) + phosphate. It catalyses the reaction 1,2-dioctanoyl-sn-glycero-3-phospho-(1D-myo-inositol-3,4,5-trisphosphate) + H2O = 1,2-dioctanoyl-sn-glycero-3-phospho-(1D-myo-inositol-4,5-bisphosphate) + phosphate. The catalysed reaction is 1,2-dihexadecanoyl-sn-glycero-3-phospho-(1D-myo-inositol-3,4,5-trisphosphate) + H2O = 1,2-dihexadecanoyl-sn-glycero-3-phospho-(1D-myo-inositol-4,5-bisphosphate) + phosphate. Functionally, acts as a phosphoinositide 3-phosphatase and regulates PtdIns(3,4,5)P3 levels. This chain is Phosphatidylinositol 3,4,5-trisphosphate 3-phosphatase ptn1 (ptn1), found in Schizosaccharomyces pombe (strain 972 / ATCC 24843) (Fission yeast).